The sequence spans 427 residues: Proline--tRNA ligase (427 aa).

The protein belongs to the class-II aminoacyl-tRNA synthetase family. ProS type 2 subfamily. As to quaternary structure, homodimer.

Its subcellular location is the cytoplasm. The catalysed reaction is tRNA(Pro) + L-proline + ATP = L-prolyl-tRNA(Pro) + AMP + diphosphate. Catalyzes the attachment of proline to tRNA(Pro) in a two-step reaction: proline is first activated by ATP to form Pro-AMP and then transferred to the acceptor end of tRNA(Pro). This is Proline--tRNA ligase from Rickettsia akari (strain Hartford).